The sequence spans 478 residues: PRAME family member 15 (478 aa).

One copy of the LRR 1; degenerate repeat lies at 99-126 (RWKLQVLDLQDVCENFWMVWSEAMAHGC). The stretch at 181-205 (HLCCKKLKILGMPFRNIRSILKMVN) is one LRR 2; degenerate repeat. An LRR 3; degenerate repeat occupies 206 to 232 (LDCIQEVEVNCKWVLPILTQFTPYLGH). The LRR 4; degenerate repeat unit spans residues 233 to 268 (MRNLQKLVLSHMDVSRYVSPEQKKEIVTQFTTQFLK). 5 LRR repeats span residues 269 to 294 (LRCL…LSCL), 295 to 326 (KTSL…SQLK), 327 to 347 (TLDL…QILL), 351 to 378 (AATL…ALSR), and 379 to 403 (CFEL…LLSH).

It belongs to the PRAME family.

This chain is PRAME family member 15, found in Homo sapiens (Human).